The following is a 317-amino-acid chain: Pyridoxal 5'-phosphate synthase subunit PdxS (317 aa).

Asp47 is a binding site for D-ribose 5-phosphate. Lys104 acts as the Schiff-base intermediate with D-ribose 5-phosphate in catalysis. Gly176 lines the D-ribose 5-phosphate pocket. Arg188 contacts D-glyceraldehyde 3-phosphate. D-ribose 5-phosphate-binding positions include Gly237 and 258 to 259 (GS).

The protein belongs to the PdxS/SNZ family. In the presence of PdxT, forms a dodecamer of heterodimers.

The enzyme catalyses aldehydo-D-ribose 5-phosphate + D-glyceraldehyde 3-phosphate + L-glutamine = pyridoxal 5'-phosphate + L-glutamate + phosphate + 3 H2O + H(+). It functions in the pathway cofactor biosynthesis; pyridoxal 5'-phosphate biosynthesis. In terms of biological role, catalyzes the formation of pyridoxal 5'-phosphate from ribose 5-phosphate (RBP), glyceraldehyde 3-phosphate (G3P) and ammonia. The ammonia is provided by the PdxT subunit. Can also use ribulose 5-phosphate and dihydroxyacetone phosphate as substrates, resulting from enzyme-catalyzed isomerization of RBP and G3P, respectively. The sequence is that of Pyridoxal 5'-phosphate synthase subunit PdxS from Corynebacterium glutamicum (strain ATCC 13032 / DSM 20300 / JCM 1318 / BCRC 11384 / CCUG 27702 / LMG 3730 / NBRC 12168 / NCIMB 10025 / NRRL B-2784 / 534).